The following is an 820-amino-acid chain: DNA replication helicase (820 aa).

90-97 serves as a coordination point for ATP; sequence GTAGAGKT.

This sequence belongs to the herpesviridae helicase family. In terms of assembly, associates with the primase and the primase-associated factor to form the helicase-primase complex.

It is found in the host nucleus. Functionally, component of the helicase/primase complex. Unwinds the DNA at the replication forks and generates single-stranded DNA for both leading and lagging strand synthesis. The primase synthesizes short RNA primers on the lagging strand that the polymerase elongates using dNTPs. Possesses helicase-like motifs and therefore may act as the helicase subunit of the complex. The protein is DNA replication helicase of Human herpesvirus 7 (strain JI) (HHV-7).